A 68-amino-acid polypeptide reads, in one-letter code: Large ribosomal subunit protein uL29 (68 aa).

This sequence belongs to the universal ribosomal protein uL29 family.

In Geobacillus sp. (strain WCH70), this protein is Large ribosomal subunit protein uL29.